We begin with the raw amino-acid sequence, 910 residues long: Eukaryotic translation initiation factor 3 subunit C (910 aa).

Positions 1-21 are disordered; the sequence is MSRFFANGSDSESESSEDEIQ. Acidic residues predominate over residues 11-20; sequence SESESSEDEI. Residues Ser34, Ser165, Ser176, and Ser185 each carry the phosphoserine modification. Positions 157-279 are disordered; it reads FREAPDQESE…IRKRAEDDED (123 aa). Residues 162-186 are compositionally biased toward acidic residues; sequence DQESEAEDEVVALESDGGDAGDDSD. Positions 188 to 207 are enriched in low complexity; sequence GVKPTEAAPKAVKTAPAKAA. Acidic residues predominate over residues 209-235; that stretch reads ADDDDSDDSIDWDSDSESETESSDDEN. Residues 240–268 show a composition bias toward basic and acidic residues; the sequence is MRERFLKRTTEKEEKDDDKRKDKRKEQKI. One can recognise a PCI domain in the interval 639–815; that stretch reads FHMHINLELL…ETVVMHRSEP (177 aa). The tract at residues 847–910 is disordered; the sequence is FFQRGNMGNR…QQQVQTIDEE (64 aa). The span at 862-874 shows a compositional bias: low complexity; it reads NRNQNNQGGNWLG. A compositionally biased stretch (basic residues) spans 882–891; sequence RNRNQRGHHK. The span at 895 to 910 shows a compositional bias: low complexity; that stretch reads DRQQQQQQQVQTIDEE.

It belongs to the eIF-3 subunit C family. In terms of assembly, component of the eukaryotic translation initiation factor 3 (eIF-3) complex. The eIF-3 complex interacts with pix.

The protein localises to the cytoplasm. Its function is as follows. Component of the eukaryotic translation initiation factor 3 (eIF-3) complex, which is involved in protein synthesis of a specialized repertoire of mRNAs and, together with other initiation factors, stimulates binding of mRNA and methionyl-tRNAi to the 40S ribosome. The eIF-3 complex specifically targets and initiates translation of a subset of mRNAs involved in cell proliferation. The sequence is that of Eukaryotic translation initiation factor 3 subunit C from Drosophila erecta (Fruit fly).